A 499-amino-acid polypeptide reads, in one-letter code: Maturase K (499 aa).

This sequence belongs to the intron maturase 2 family. MatK subfamily.

It is found in the plastid. The protein localises to the chloroplast. Its function is as follows. Usually encoded in the trnK tRNA gene intron. Probably assists in splicing its own and other chloroplast group II introns. The polypeptide is Maturase K (Gymnocladus chinensis (Soap tree)).